Reading from the N-terminus, the 265-residue chain is NAD kinase (265 aa).

Aspartate 45 functions as the Proton acceptor in the catalytic mechanism. NAD(+) is bound by residues 45-46 (DG), 122-123 (NE), arginine 148, aspartate 150, 161-166 (TAYNKS), alanine 185, and glutamine 223.

The protein belongs to the NAD kinase family. It depends on a divalent metal cation as a cofactor.

Its subcellular location is the cytoplasm. It catalyses the reaction NAD(+) + ATP = ADP + NADP(+) + H(+). In terms of biological role, involved in the regulation of the intracellular balance of NAD and NADP, and is a key enzyme in the biosynthesis of NADP. Catalyzes specifically the phosphorylation on 2'-hydroxyl of the adenosine moiety of NAD to yield NADP. This chain is NAD kinase, found in Enterococcus faecalis (strain ATCC 700802 / V583).